We begin with the raw amino-acid sequence, 434 residues long: Fc receptor-like protein 6 (434 aa).

The first 19 residues, 1-19 (MLLWTAVLLFVPCVGKTVW), serve as a signal peptide directing secretion. 3 consecutive Ig-like C2-type domains span residues 20–95 (LYLQ…QTFT), 111–197 (PPVL…PQLE), and 207–293 (PVLT…KKLS). The Extracellular segment spans residues 20–307 (LYLQAWPNPV…QVLFTPASNW (288 aa)). 3 disulfide bridges follow: cysteine 39/cysteine 83, cysteine 132/cysteine 180, and cysteine 228/cysteine 276. N-linked (GlcNAc...) asparagine glycosylation is present at asparagine 65. Asparagine 273 is a glycosylation site (N-linked (GlcNAc...) asparagine). Residues 308-328 (LVPWLPASLLGLMVIAAALLV) form a helical membrane-spanning segment. Over 329–434 (YVRSWRKAGP…PLSDCEEVLC (106 aa)) the chain is Cytoplasmic. Residues 369–374 (VVYSVV) carry the ITIM motif motif. Residue tyrosine 371 is modified to Phosphotyrosine.

In terms of assembly, interacts (tyrosine phosphorylated) with PTPN11. Interacts (tyrosine phosphorylated) with PTPN6, INPP5D, INPPL1 and GRB2. Interacts with class II MHC HLA-DR when the alpha chain is associated with a beta-1, beta-4 or a beta-5 but not a beta-3 chain. Phosphorylated on Tyr residues. Tyrosine phosphorylation induces association with phosphatase PTPN11, PTPN6, INPP5D, INPPL1 and GRB2. In terms of tissue distribution, expressed by cytolytic cells including NK cells, effector and effector-memory CD8(+) T-cells, and a subset of NKT cells (at protein level). Also expressed in gamma delta T cells and in a rare subset of effector CD4(+) T-cells (at protein level). Expressed in spleen, skin, peripheral blood leukocytes, liver, lung, bone marrow, small intestine and placenta. Expression among T-cells is greatly expanded in HIV-1 infected individuals, and includes not only effector and effector-memory CD8(+) T-cells but also populations of CD4(+) T-cells. Expression among CD8(+) T-cells and NK cells is expanded in individuals with chronic lymphocytic leukemia (CLL) but is reduced in PBMCs from patients with acute (AML), chronic myeloid leukemia (CML) and non-Hodgkin's lymphoma. Expression is higher in PBMCs and/or CD3(+) cells of patients with autoimmune diseases, such as rheumatoid arthritis (RA), systemic lupus erythematosus (SLE) and idiopathic thrombocytopenia purpura (ITP). In contrast, expression in CD3(+) cells from patients with lupus anticoagulans (LA) is higher.

The protein resides in the cell membrane. In terms of biological role, acts as a MHC class II receptor. When stimulated on its own, does not play a role in cytokine production or the release of cytotoxic granules by NK cells and cytotoxic CD8(+) T cells. Does not act as an Fc receptor. This Homo sapiens (Human) protein is Fc receptor-like protein 6 (FCRL6).